The primary structure comprises 1296 residues: Phosphoribosylformylglycinamidine synthase (1296 aa).

The disordered stretch occupies residues 304-323 (WPGAATGSGGEIRDEGATGR). ATP contacts are provided by residues 306–317 (GAATGSGGEIRD) and Ala-677. The Mg(2+) site is built by Asp-678, Glu-717, Asn-721, and Asp-885. Ser-887 provides a ligand contact to ATP. Residues 1000–1013 (PDCADQEHQAKQDE) are compositionally biased toward basic and acidic residues. The disordered stretch occupies residues 1000 to 1019 (PDCADQEHQAKQDESDPGLN). The region spanning 1043 to 1296 (VAVLREQGVN…MFRNARKQLG (254 aa)) is the Glutamine amidotransferase type-1 domain. Cys-1136 acts as the Nucleophile in catalysis. Residues His-1261 and Glu-1263 contribute to the active site.

It in the N-terminal section; belongs to the FGAMS family. Monomer.

It localises to the cytoplasm. The enzyme catalyses N(2)-formyl-N(1)-(5-phospho-beta-D-ribosyl)glycinamide + L-glutamine + ATP + H2O = 2-formamido-N(1)-(5-O-phospho-beta-D-ribosyl)acetamidine + L-glutamate + ADP + phosphate + H(+). It participates in purine metabolism; IMP biosynthesis via de novo pathway; 5-amino-1-(5-phospho-D-ribosyl)imidazole from N(2)-formyl-N(1)-(5-phospho-D-ribosyl)glycinamide: step 1/2. Its function is as follows. Phosphoribosylformylglycinamidine synthase involved in the purines biosynthetic pathway. Catalyzes the ATP-dependent conversion of formylglycinamide ribonucleotide (FGAR) and glutamine to yield formylglycinamidine ribonucleotide (FGAM) and glutamate. The protein is Phosphoribosylformylglycinamidine synthase of Yersinia pestis bv. Antiqua (strain Antiqua).